The sequence spans 402 residues: Argininosuccinate synthase (402 aa).

Residue 9–17 (AYSGGLDTS) coordinates ATP. Position 86 (Y86) interacts with L-citrulline. G116 serves as a coordination point for ATP. The L-aspartate site is built by T118, N122, and D123. Residue N122 coordinates L-citrulline. Residues R126, S174, S183, E259, and Y271 each contribute to the L-citrulline site.

Belongs to the argininosuccinate synthase family. Type 1 subfamily. In terms of assembly, homotetramer.

It is found in the cytoplasm. It catalyses the reaction L-citrulline + L-aspartate + ATP = 2-(N(omega)-L-arginino)succinate + AMP + diphosphate + H(+). It functions in the pathway amino-acid biosynthesis; L-arginine biosynthesis; L-arginine from L-ornithine and carbamoyl phosphate: step 2/3. This chain is Argininosuccinate synthase, found in Geobacillus sp. (strain WCH70).